We begin with the raw amino-acid sequence, 466 residues long: Cysteine--tRNA ligase (466 aa).

Position 33 (Cys33) interacts with Zn(2+). Positions 35 to 45 (PTVYDFAHIGN) match the 'HIGH' region motif. Positions 221, 246, and 250 each coordinate Zn(2+). A 'KMSKS' region motif is present at residues 279-283 (KMSKS). Lys282 serves as a coordination point for ATP.

This sequence belongs to the class-I aminoacyl-tRNA synthetase family. In terms of assembly, monomer. It depends on Zn(2+) as a cofactor.

Its subcellular location is the cytoplasm. The catalysed reaction is tRNA(Cys) + L-cysteine + ATP = L-cysteinyl-tRNA(Cys) + AMP + diphosphate. This Sinorhizobium medicae (strain WSM419) (Ensifer medicae) protein is Cysteine--tRNA ligase.